The primary structure comprises 312 residues: Beta-ketoacyl-[acyl-carrier-protein] synthase III (312 aa).

Residues C112 and H237 contribute to the active site. An ACP-binding region spans residues 238-242 (QANIR). Residue N267 is part of the active site.

This sequence belongs to the thiolase-like superfamily. FabH family. As to quaternary structure, homodimer.

The protein resides in the cytoplasm. It carries out the reaction malonyl-[ACP] + acetyl-CoA + H(+) = 3-oxobutanoyl-[ACP] + CO2 + CoA. Its pathway is lipid metabolism; fatty acid biosynthesis. Functionally, catalyzes the condensation reaction of fatty acid synthesis by the addition to an acyl acceptor of two carbons from malonyl-ACP. Catalyzes the first condensation reaction which initiates fatty acid synthesis and may therefore play a role in governing the total rate of fatty acid production. Possesses both acetoacetyl-ACP synthase and acetyl transacylase activities. Its substrate specificity determines the biosynthesis of branched-chain and/or straight-chain of fatty acids. The protein is Beta-ketoacyl-[acyl-carrier-protein] synthase III of Listeria welshimeri serovar 6b (strain ATCC 35897 / DSM 20650 / CCUG 15529 / CIP 8149 / NCTC 11857 / SLCC 5334 / V8).